The sequence spans 61 residues: Temporin-SN2 (61 aa).

A signal peptide spans 1 to 22 (MFTLKKTLLLLFFLGTINLSLC). The propeptide at 23–44 (EEERNAEEERRDGDDEMDVEVK) is removed in mature form. Lysine amide is present on K61.

Belongs to the frog skin active peptide (FSAP) family. Temporin subfamily. In terms of tissue distribution, expressed by the skin glands.

It is found in the secreted. Functionally, antimicrobial peptide. Active against some Gram-positive and Gram-negative bacterial strains. Active against fungus C.glabrata 090902 but not against C.albicans ATCC 12231. Shows very weak hemolytic activity against human erythrocytes. This is Temporin-SN2 from Sylvirana spinulosa (Fine-spined frog).